The following is a 104-amino-acid chain: MTFRPLHDRILVRRIEAEEKTAGGIIIPDTAKEKPQEGEVIAIGPGARDESGKLTPLDVKAGDRILFGKWSGTEIKLNGEDLLIMKESDVMGVIEQTATVKKAA.

The protein belongs to the GroES chaperonin family. Heptamer of 7 subunits arranged in a ring. Interacts with the chaperonin GroEL.

It is found in the cytoplasm. Functionally, together with the chaperonin GroEL, plays an essential role in assisting protein folding. The GroEL-GroES system forms a nano-cage that allows encapsulation of the non-native substrate proteins and provides a physical environment optimized to promote and accelerate protein folding. GroES binds to the apical surface of the GroEL ring, thereby capping the opening of the GroEL channel. The chain is Co-chaperonin GroES 2 from Mesorhizobium japonicum (strain LMG 29417 / CECT 9101 / MAFF 303099) (Mesorhizobium loti (strain MAFF 303099)).